Here is a 113-residue protein sequence, read N- to C-terminus: Nitrogenase-stabilizing/protective protein NifW (113 aa).

This sequence belongs to the NifW family. In terms of assembly, homotrimer; associates with NifD.

May protect the nitrogenase Fe-Mo protein from oxidative damage. This chain is Nitrogenase-stabilizing/protective protein NifW, found in Dechloromonas aromatica (strain RCB).